The primary structure comprises 63 residues: Potassium channel toxin MeuTXKalpha4 (63 aa).

Residues 1–28 (MSRLLIFILTAVVLSVIIDILNNSKVEG) form the signal peptide. 3 disulfides stabilise this stretch: cysteine 35–cysteine 53, cysteine 39–cysteine 59, and cysteine 43–cysteine 61.

It belongs to the short scorpion toxin superfamily. Potassium channel inhibitor family. Expressed by the venom gland.

The protein resides in the secreted. Functionally, may block voltage-gated potassium channels (Kv). In Mesobuthus eupeus (Lesser Asian scorpion), this protein is Potassium channel toxin MeuTXKalpha4.